We begin with the raw amino-acid sequence, 338 residues long: tRNA N6-adenosine threonylcarbamoyltransferase (338 aa).

H111 and H115 together coordinate Fe cation. Residues 133–137, D166, G179, D183, and N275 contribute to the substrate site; that span reads LVSGG. Residue D300 participates in Fe cation binding.

This sequence belongs to the KAE1 / TsaD family. The cofactor is Fe(2+).

The protein localises to the cytoplasm. The catalysed reaction is L-threonylcarbamoyladenylate + adenosine(37) in tRNA = N(6)-L-threonylcarbamoyladenosine(37) in tRNA + AMP + H(+). Functionally, required for the formation of a threonylcarbamoyl group on adenosine at position 37 (t(6)A37) in tRNAs that read codons beginning with adenine. Is involved in the transfer of the threonylcarbamoyl moiety of threonylcarbamoyl-AMP (TC-AMP) to the N6 group of A37, together with TsaE and TsaB. TsaD likely plays a direct catalytic role in this reaction. The sequence is that of tRNA N6-adenosine threonylcarbamoyltransferase from Treponema denticola (strain ATCC 35405 / DSM 14222 / CIP 103919 / JCM 8153 / KCTC 15104).